The chain runs to 172 residues: MKTKEVVDDITMNRAITRITYEIIERNKDLNQVVLAGIKTRGVHLAHRIQKRLAQLENIDIPVAEVDTKPFRDDIKVEEDTTVIPVDITDRQVILIDDVLYTGRTIRAAIDNLVSHGRPSRVGLAVLVDRGHRELPIRADYVGKNIPTSQTEEIIVEMTETDGQDRVLIMGE.

A PRPP-binding motif is present at residues 93–105; the sequence is VILIDDVLYTGRT.

The protein belongs to the purine/pyrimidine phosphoribosyltransferase family. PyrR subfamily. As to quaternary structure, homodimer and homohexamer; in equilibrium.

The enzyme catalyses UMP + diphosphate = 5-phospho-alpha-D-ribose 1-diphosphate + uracil. In terms of biological role, regulates transcriptional attenuation of the pyrimidine nucleotide (pyr) operon by binding in a uridine-dependent manner to specific sites on pyr mRNA. This disrupts an antiterminator hairpin in the RNA and favors formation of a downstream transcription terminator, leading to a reduced expression of downstream genes. Functionally, also displays a weak uracil phosphoribosyltransferase activity which is not physiologically significant. This is Bifunctional protein PyrR from Streptococcus sanguinis (strain SK36).